A 156-amino-acid chain; its full sequence is uncharacterized protein (156 aa).

This is an uncharacterized protein from Saccharolobus islandicus (Sulfolobus islandicus).